A 359-amino-acid polypeptide reads, in one-letter code: Peptide chain release factor 1 (359 aa).

The residue at position 235 (glutamine 235) is an N5-methylglutamine. The tract at residues 283–305 is disordered; sequence QKAESERSASRKTQVGSGDRSER.

Belongs to the prokaryotic/mitochondrial release factor family. Post-translationally, methylated by PrmC. Methylation increases the termination efficiency of RF1.

The protein localises to the cytoplasm. Its function is as follows. Peptide chain release factor 1 directs the termination of translation in response to the peptide chain termination codons UAG and UAA. This chain is Peptide chain release factor 1, found in Bartonella bacilliformis (strain ATCC 35685 / KC583 / Herrer 020/F12,63).